A 429-amino-acid chain; its full sequence is UDP-N-acetylglucosamine 1-carboxyvinyltransferase (429 aa).

22 to 23 (KN) contributes to the phosphoenolpyruvate binding site. R102 is a UDP-N-acetyl-alpha-D-glucosamine binding site. C126 (proton donor) is an active-site residue. Residue C126 is modified to 2-(S-cysteinyl)pyruvic acid O-phosphothioketal. Residues 131–135 (RPVDL), 171–174 (KVSV), D316, and I338 each bind UDP-N-acetyl-alpha-D-glucosamine.

It belongs to the EPSP synthase family. MurA subfamily.

It localises to the cytoplasm. The catalysed reaction is phosphoenolpyruvate + UDP-N-acetyl-alpha-D-glucosamine = UDP-N-acetyl-3-O-(1-carboxyvinyl)-alpha-D-glucosamine + phosphate. The protein operates within cell wall biogenesis; peptidoglycan biosynthesis. In terms of biological role, cell wall formation. Adds enolpyruvyl to UDP-N-acetylglucosamine. The sequence is that of UDP-N-acetylglucosamine 1-carboxyvinyltransferase from Chelativorans sp. (strain BNC1).